The sequence spans 177 residues: tRNA (cytidine(56)-2'-O)-methyltransferase (177 aa).

S-adenosyl-L-methionine is bound by residues Leu84 and Gly109–Val113.

The protein belongs to the aTrm56 family. In terms of assembly, homodimer.

The protein resides in the cytoplasm. It catalyses the reaction cytidine(56) in tRNA + S-adenosyl-L-methionine = 2'-O-methylcytidine(56) in tRNA + S-adenosyl-L-homocysteine + H(+). Functionally, specifically catalyzes the AdoMet-dependent 2'-O-ribose methylation of cytidine at position 56 in tRNAs. This chain is tRNA (cytidine(56)-2'-O)-methyltransferase, found in Methanosarcina acetivorans (strain ATCC 35395 / DSM 2834 / JCM 12185 / C2A).